A 127-amino-acid polypeptide reads, in one-letter code: Protein translocase subunit SecE (127 aa).

Topologically, residues 1–19 are cytoplasmic; that stretch reads MSANTEAQGSGRGLEAMKW. Residues 20–32 form a helical membrane-spanning segment; sequence VVVVALLLVAIVG. The Periplasmic portion of the chain corresponds to 33–48; the sequence is NYLYRDIMLPLRALAV. A helical transmembrane segment spans residues 49–60; the sequence is VILIAAAGGVAL. Topologically, residues 61–97 are cytoplasmic; it reads LTTKGKATVAFAREARTEVRKVIWPTRQETLHTTLIV. The chain crosses the membrane as a helical span at residues 98-115; the sequence is AAVTAVMSLILWGLDGIL. At 116–127 the chain is on the periplasmic side; that stretch reads VRLVSFITGLRF.

It belongs to the SecE/SEC61-gamma family. Component of the Sec protein translocase complex. Heterotrimer consisting of SecY, SecE and SecG subunits. The heterotrimers can form oligomers, although 1 heterotrimer is thought to be able to translocate proteins. Interacts with the ribosome. Interacts with SecDF, and other proteins may be involved. Interacts with SecA.

The protein localises to the cell inner membrane. Its function is as follows. Essential subunit of the Sec protein translocation channel SecYEG. Clamps together the 2 halves of SecY. May contact the channel plug during translocation. In Escherichia coli O157:H7, this protein is Protein translocase subunit SecE.